The primary structure comprises 80 residues: Peptide LaIT2 (80 aa).

Residues 1–21 (MAKHLIVMFLVIMVISSLVDC) form the signal peptide. In terms of domain architecture, BetaSPN-type CS-alpha/beta spans 49–80 (QYGCPIISNMCEDHCRRKKMEGQCDLLDCVCS). 3 cysteine pairs are disulfide-bonded: Cys52–Cys72, Cys59–Cys77, and Cys63–Cys79.

It belongs to the long chain scorpion toxin family. Class 2 subfamily. Expressed by the venom gland.

The protein localises to the secreted. Functionally, dual-function toxin that acts both as an insecticidal and an antimicrobial peptide. May inhibit voltage-gated potassium channels (Kv). This amphipathic peptide causes significant antimicrobial activity against E.coli (MIC=7 uM) but does not show any activity against S.aureus even at high concentration. In vivo, causes paralysis or death to crickets. This is Peptide LaIT2 from Liocheles australasiae (Dwarf wood scorpion).